The primary structure comprises 63 residues: Odorranain-B1 (63 aa).

The N-terminal stretch at 1-22 (MFTTKKPLLLLFFLGIISLSVC) is a signal peptide. The propeptide occupies 23–41 (EQERDADEEDGGEVTEEEV).

It belongs to the frog skin active peptide (FSAP) family. Brevinin subfamily. In terms of tissue distribution, expressed by the skin glands.

It localises to the secreted. This is Odorranain-B1 from Odorrana hainanensis (Odor frog).